A 428-amino-acid polypeptide reads, in one-letter code: Probable glucose-6-phosphate isomerase (428 aa).

E269 (proton donor) is an active-site residue. Active-site residues include H290 and K401.

The protein belongs to the GPI family.

It localises to the cytoplasm. It catalyses the reaction alpha-D-glucose 6-phosphate = beta-D-fructose 6-phosphate. It participates in carbohydrate biosynthesis; gluconeogenesis. The protein operates within carbohydrate degradation; glycolysis; D-glyceraldehyde 3-phosphate and glycerone phosphate from D-glucose: step 2/4. Catalyzes the reversible isomerization of glucose-6-phosphate to fructose-6-phosphate. This is Probable glucose-6-phosphate isomerase from Natronomonas pharaonis (strain ATCC 35678 / DSM 2160 / CIP 103997 / JCM 8858 / NBRC 14720 / NCIMB 2260 / Gabara) (Halobacterium pharaonis).